We begin with the raw amino-acid sequence, 162 residues long: MTAIQNFFKTFFLTELLKGLALTGRYTFQRKVTVQFPEEKTPISPRFRGLHALRRYENGEERCIACKLCEAVCPALAITIESETRADNTRRTTRYDIDLTKCIFCGFCEESCPVDSIVETHILEYHGEKRGDLYFTKDMLLAVGDRYETEIAANKAADAPYR.

2 4Fe-4S ferredoxin-type domains span residues 54–83 (RRYE…IESE) and 93–122 (TRYD…ETHI). Residues C63, C66, C69, C73, C102, C105, C108, and C112 each coordinate [4Fe-4S] cluster.

The protein belongs to the complex I 23 kDa subunit family. In terms of assembly, NDH-1 is composed of 14 different subunits. Subunits NuoA, H, J, K, L, M, N constitute the membrane sector of the complex. Requires [4Fe-4S] cluster as cofactor.

Its subcellular location is the cell inner membrane. The enzyme catalyses a quinone + NADH + 5 H(+)(in) = a quinol + NAD(+) + 4 H(+)(out). NDH-1 shuttles electrons from NADH, via FMN and iron-sulfur (Fe-S) centers, to quinones in the respiratory chain. The immediate electron acceptor for the enzyme in this species is believed to be ubiquinone. Couples the redox reaction to proton translocation (for every two electrons transferred, four hydrogen ions are translocated across the cytoplasmic membrane), and thus conserves the redox energy in a proton gradient. The sequence is that of NADH-quinone oxidoreductase subunit I from Paraburkholderia xenovorans (strain LB400).